The sequence spans 159 residues: Transcription elongation factor GreA (159 aa).

Belongs to the GreA/GreB family.

Functionally, necessary for efficient RNA polymerase transcription elongation past template-encoded arresting sites. The arresting sites in DNA have the property of trapping a certain fraction of elongating RNA polymerases that pass through, resulting in locked ternary complexes. Cleavage of the nascent transcript by cleavage factors such as GreA or GreB allows the resumption of elongation from the new 3'terminus. GreA releases sequences of 2 to 3 nucleotides. The protein is Transcription elongation factor GreA of Mycoplasmoides gallisepticum (strain R(low / passage 15 / clone 2)) (Mycoplasma gallisepticum).